The primary structure comprises 216 residues: Uracil phosphoribosyltransferase (216 aa).

30–34 (KNLVR) contributes to the GTP binding site. 5-phospho-alpha-D-ribose 1-diphosphate contacts are provided by residues arginine 80, arginine 105, and 140–148 (DPMIATAST). Residues isoleucine 203 and 208-210 (GDA) contribute to the uracil site. Position 209 (aspartate 209) interacts with 5-phospho-alpha-D-ribose 1-diphosphate.

This sequence belongs to the UPRTase family. It depends on Mg(2+) as a cofactor.

It carries out the reaction UMP + diphosphate = 5-phospho-alpha-D-ribose 1-diphosphate + uracil. It functions in the pathway pyrimidine metabolism; UMP biosynthesis via salvage pathway; UMP from uracil: step 1/1. Its activity is regulated as follows. Allosterically activated by GTP. Functionally, catalyzes the conversion of uracil and 5-phospho-alpha-D-ribose 1-diphosphate (PRPP) to UMP and diphosphate. The protein is Uracil phosphoribosyltransferase of Saccharolobus islandicus (strain M.16.4 / Kamchatka #3) (Sulfolobus islandicus).